The sequence spans 417 residues: Serine hydroxymethyltransferase (417 aa).

(6S)-5,6,7,8-tetrahydrofolate is bound by residues L121 and 125–127 (GHL). An N6-(pyridoxal phosphate)lysine modification is found at K229. Position 355–357 (355–357 (SPF)) interacts with (6S)-5,6,7,8-tetrahydrofolate.

The protein belongs to the SHMT family. In terms of assembly, homodimer. Pyridoxal 5'-phosphate is required as a cofactor.

The protein resides in the cytoplasm. It carries out the reaction (6R)-5,10-methylene-5,6,7,8-tetrahydrofolate + glycine + H2O = (6S)-5,6,7,8-tetrahydrofolate + L-serine. Its pathway is one-carbon metabolism; tetrahydrofolate interconversion. It functions in the pathway amino-acid biosynthesis; glycine biosynthesis; glycine from L-serine: step 1/1. Catalyzes the reversible interconversion of serine and glycine with tetrahydrofolate (THF) serving as the one-carbon carrier. This reaction serves as the major source of one-carbon groups required for the biosynthesis of purines, thymidylate, methionine, and other important biomolecules. Also exhibits THF-independent aldolase activity toward beta-hydroxyamino acids, producing glycine and aldehydes, via a retro-aldol mechanism. This is Serine hydroxymethyltransferase from Xanthomonas oryzae pv. oryzae (strain MAFF 311018).